A 255-amino-acid chain; its full sequence is Homeobox protein Hox-D4 (255 aa).

The segment at 31-127 (EQGADYYGGG…PKQPPSGTAL (97 aa)) is disordered. Residues 94–107 (EPCPAPPAPPPAPL) show a composition bias toward pro residues. An Antp-type hexapeptide motif is present at residues 133–138 (VYPWMK). Positions 154–213 (PKRSRTAYTRQQVLELEKEFHFNRYLTRRRRIEIAHTLCLSERQIKIWFQNRRMKWKKDH) form a DNA-binding region, homeobox. Residues 212 to 255 (DHKLPNTKGRSSSSSSSSSCSSSVAPSQHLQPMAKDHHTDLTTL) are disordered. Over residues 222–234 (SSSSSSSSSCSSS) the composition is skewed to low complexity. Residues 245-255 (AKDHHTDLTTL) are compositionally biased toward basic and acidic residues.

Belongs to the Antp homeobox family. Deformed subfamily. In terms of assembly, forms a DNA-binding heterodimer with transcription factor PBX1.

The protein resides in the nucleus. Functionally, sequence-specific transcription factor which is part of a developmental regulatory system that provides cells with specific positional identities on the anterior-posterior axis. The sequence is that of Homeobox protein Hox-D4 (HOXD4) from Homo sapiens (Human).